We begin with the raw amino-acid sequence, 185 residues long: Serine/arginine-rich splicing factor RSZ21A (185 aa).

An RRM domain is found at 2–73 (ARVYVGNLDP…WRVELSRNAS (72 aa)). A CCHC-type zinc finger spans residues 87-104 (SKCYECGETGHFARECRL). Residues 109–185 (GGLGSGRRRS…YDNGYRRSRS (77 aa)) are disordered. A compositionally biased stretch (basic residues) spans 114-131 (GRRRSRSRSRSRSPRYRR). Composition is skewed to low complexity over residues 132 to 145 (SPSYGRRSYSPAGR) and 152 to 163 (VSPARARSYSRS).

This sequence belongs to the splicing factor SR family. Post-translationally, extensively phosphorylated on serine residues in the RS domain. Expressed in roots, leaves and immature seeds.

The protein localises to the nucleus. Involved in pre-mRNA splicing. This is Serine/arginine-rich splicing factor RSZ21A (RSZ21A) from Oryza sativa subsp. japonica (Rice).